We begin with the raw amino-acid sequence, 309 residues long: Homoserine kinase (309 aa).

91–101 (PIGSGLGSSAC) contributes to the ATP binding site.

The protein belongs to the GHMP kinase family. Homoserine kinase subfamily.

It localises to the cytoplasm. It catalyses the reaction L-homoserine + ATP = O-phospho-L-homoserine + ADP + H(+). It participates in amino-acid biosynthesis; L-threonine biosynthesis; L-threonine from L-aspartate: step 4/5. Functionally, catalyzes the ATP-dependent phosphorylation of L-homoserine to L-homoserine phosphate. This is Homoserine kinase from Cronobacter sakazakii (strain ATCC BAA-894) (Enterobacter sakazakii).